A 778-amino-acid polypeptide reads, in one-letter code: Semaphorin-3ab (778 aa).

An N-terminal signal peptide occupies residues 1–17 (MDYLWWIVLLIWTLIAP). The 484-residue stretch at 32-515 (RLKPSYKEML…SAIGVSQMPL (484 aa)) folds into the Sema domain. Asn54 carries an N-linked (GlcNAc...) asparagine glycan. Cysteines 105 and 116 form a disulfide. N-linked (GlcNAc...) asparagine glycosylation occurs at Asn127. 4 disulfides stabilise this stretch: Cys134/Cys143, Cys270/Cys382, Cys294/Cys342, and Cys518/Cys536. The Ig-like C2-type domain occupies 579–668 (GEAGLLDKTV…FIQTLLRLTL (90 aa)). Asn593 carries N-linked (GlcNAc...) asparagine glycosylation. A disulfide bond links Cys652 and Cys716. The tract at residues 727 to 778 (RRQKANLLHASQSHTSQILHSSQSHAKWKLLQENKKGRNRRTHEMQRAPRSV) is disordered. Residues 735–751 (HASQSHTSQILHSSQSH) show a composition bias toward polar residues. Residues 756-778 (LLQENKKGRNRRTHEMQRAPRSV) show a composition bias toward basic and acidic residues.

It belongs to the semaphorin family. Expressed in rhombomeres three and five, and in the posterior half of newly formed somites which is avoided by ventrally extending motor axons.

Its subcellular location is the secreted. In terms of biological role, might normally influence the midsegmental pathway choice of the ventrally extending motor axons by contributing to a repulsive domain in the posterior somite. The polypeptide is Semaphorin-3ab (sema3ab) (Danio rerio (Zebrafish)).